The sequence spans 224 residues: MKKTVIICIYIFLLLSGALVGLAKEETAQKSENQPVVIPDQAIRLRILANSDSDQDQQLKRHIRDAVNKEITTWVKDITSIEEARRVIRSKLPEIKAIAKETMEKEGANQSISVDFDKISFPTKLYGNMVYPAGEYEAILITLGNGDGANWWCVLFPPLCFLDFSNGEAVKEQEDKEASKKQTEKVLEDVTAKAEKAKKEENEEKEDGTEVKFFLVEWISDLFS.

The sequence is that of Stage II sporulation protein R (spoIIR) from Bacillus subtilis (strain 168).